The following is a 228-amino-acid chain: Ribulose-phosphate 3-epimerase (228 aa).

S11 is a binding site for substrate. 3 residues coordinate a divalent metal cation: H36, D38, and H69. D38 serves as the catalytic Proton acceptor. Substrate contacts are provided by residues H69, 145–148 (GFCG), 180–182 (DGG), and 202–203 (AS). D180 lines the a divalent metal cation pocket. The active-site Proton donor is D180.

The protein belongs to the ribulose-phosphate 3-epimerase family. A divalent metal cation is required as a cofactor.

The catalysed reaction is D-ribulose 5-phosphate = D-xylulose 5-phosphate. It participates in carbohydrate degradation. Its function is as follows. Catalyzes the reversible epimerization of D-ribulose 5-phosphate to D-xylulose 5-phosphate. This is Ribulose-phosphate 3-epimerase from Chlamydia muridarum (strain MoPn / Nigg).